A 493-amino-acid chain; its full sequence is Xaa-Pro dipeptidase (493 aa).

A2 is modified (N-acetylalanine). S167 carries the phosphoserine modification. An a dipeptide-binding site is contributed by H255. Mn(2+) contacts are provided by D276, D287, and H370. Position 287 (D287) interacts with a dipeptide. A dipeptide-binding residues include H377 and R398. The Mn(2+) site is built by E412 and E452.

Belongs to the peptidase M24B family. Eukaryotic-type prolidase subfamily. Homodimer. Requires Mn(2+) as cofactor.

The enzyme catalyses Xaa-L-Pro dipeptide + H2O = an L-alpha-amino acid + L-proline. Functionally, dipeptidase that catalyzes the hydrolysis of dipeptides with a prolyl (Xaa-Pro) or hydroxyprolyl residue in the C-terminal position. The preferred dipeptide substrate is Gly-Pro, but other Xaa-Pro dipeptides, such as Ala-Pro, Met-Pro, Phe-Pro, Val-Pro and Leu-Pro, can be cleaved. Plays an important role in collagen metabolism because the high level of iminoacids in collagen. The polypeptide is Xaa-Pro dipeptidase (PEPD) (Pongo abelii (Sumatran orangutan)).